A 716-amino-acid chain; its full sequence is Forkhead box protein P2 (716 aa).

Over residues 1 to 28 (MMQESATETISNSSMNQNGMSTLSSQLD) the composition is skewed to polar residues. Disordered stretches follow at residues 1–45 (MMQE…SEVS) and 286–340 (KHGG…TGAS). Residues 293–306 (TTNNSSSTTSSTTS) are compositionally biased toward low complexity. Polar residues predominate over residues 316 to 325 (SIVNGQSSVL). Over residues 327-338 (ARRDSSSHEETG) the composition is skewed to basic and acidic residues. Residues 347-372 (GVCKWPGCESICEDFGQFLKHLNNEH) form a C2H2-type zinc finger. Residues 389 to 410 (VQQLEIQLSKERERLQAMMTHL) form a leucine-zipper region. Residues 423–427 (PLNLV) are CTBP1-binding. Residues 439–460 (TSPQSLPQTPTTPTAPVTPITQ) show a composition bias toward low complexity. The disordered stretch occupies residues 439-466 (TSPQSLPQTPTTPTAPVTPITQGPSVIT). Positions 505–595 (RPPFTYATLI…SQKITGSPTL (91 aa)) form a DNA-binding region, fork-head. Disordered stretches follow at residues 650–669 (LDHIDSNGNSSPGCSPQPHI) and 679–716 (VIAEDEDCPMSLVTTANHSPELEDDREIEEEPLSEDLE). Acidic residues predominate over residues 700-716 (LEDDREIEEEPLSEDLE).

As to quaternary structure, forms homodimers and heterodimers with FOXP1 and FOXP4. Dimerization is required for DNA-binding. Interacts with CTBP1. Interacts with FOXP1. Interacts with TBR1. Interacts with ZMYM2.

Its subcellular location is the nucleus. In terms of biological role, transcriptional repressor that may play a role in the specification and differentiation of lung epithelium. May also play a role in developing neural, gastrointestinal and cardiovascular tissues. Can act with CTBP1 to synergistically repress transcription but CTPBP1 is not essential. Plays a role in synapse formation by regulating SRPX2 levels. In Pan paniscus (Pygmy chimpanzee), this protein is Forkhead box protein P2 (FOXP2).